A 1316-amino-acid chain; its full sequence is DNA-directed RNA polymerase subunit beta' (1316 aa).

Cys60, Cys62, Cys75, and Cys78 together coordinate Zn(2+). Mg(2+)-binding residues include Asp535, Asp537, and Asp539. 4 residues coordinate Zn(2+): Cys891, Cys968, Cys975, and Cys978.

This sequence belongs to the RNA polymerase beta' chain family. In terms of assembly, the RNAP catalytic core consists of 2 alpha, 1 beta, 1 beta' and 1 omega subunit. When a sigma factor is associated with the core the holoenzyme is formed, which can initiate transcription. Mg(2+) serves as cofactor. It depends on Zn(2+) as a cofactor.

The catalysed reaction is RNA(n) + a ribonucleoside 5'-triphosphate = RNA(n+1) + diphosphate. Its function is as follows. DNA-dependent RNA polymerase catalyzes the transcription of DNA into RNA using the four ribonucleoside triphosphates as substrates. This is DNA-directed RNA polymerase subunit beta' from Mycobacterium leprae (strain Br4923).